Reading from the N-terminus, the 398-residue chain is Ubiquitin-like modifier-activating enzyme 5 (398 aa).

Residues Gly-76, Asp-97, Lys-120, Asn-143, and Asn-177 each contribute to the ATP site. Cys-219 and Cys-222 together coordinate Zn(2+). Catalysis depends on Cys-243, which acts as the Glycyl thioester intermediate. Zn(2+) is bound by residues Cys-296 and Cys-301.

Belongs to the ubiquitin-activating E1 family. UBA5 subfamily.

Its function is as follows. E1-like enzyme which activates UFM1. This Drosophila grimshawi (Hawaiian fruit fly) protein is Ubiquitin-like modifier-activating enzyme 5.